Reading from the N-terminus, the 1442-residue chain is MASAADALEPESGSSTAGGGSHPVRAARSARGRRRRSGGTRRAAAPDREYLQRPSYCDAAFALEQIAKGRATGRRAPLWLRAKFQRLLFNLGCYIQKNCGKFLVVGLLYSAFAVGLRAANLETNVEELWVEVGGRVSRELNYTRQKIGEEAMFNPQLMIQTPQEDGTNVLTTEALRQHLDSALQASRVHVYMYNRQWKLEHLCYKSGELITEAGYMDQIIEYLYPCLIITPLDCFWEGAKLQSGTAYLLGKPPLQWINFDPLEFLEELKKINYQVESWEEMLNKAEVGHGYMDRPCLNPADPDCPITAPNKNSTKPLDVALVLSGGCYGLSRKYMHWQEELIIGGTVKNSSGKLVSAQALQTMFQLMTPKQMYEHFKGYEYVSHINWNEDKAAAILEAWQRMYVEVVHQSVAQNSTQKVLSFTTTTLDDILKSFSDVSVIRVASGYLLMLAYACLTMLRWDCAKSQGAVGLAGVLLVALSVAAGLGLCSLIGISFNAATTQVLPFLALGVGVDDVFLLAHAFSETGQNKRIPFEDRTGECLKRTGASVALTSISNVTAFFMAALIPIPALRAFSLQAAVVVVFNFAMVLLIFPAILSMDLYRREDRRLDIFCCFTSPCVTRVIQIEPQAYAENDNICYSSPPPYSSHSFAHETQITMQSTVQLRTEYDPHTQAYYTTAEPRSEISVQPVTVTQDSLSCQSPESASSTRDLLSQFSDSSVHCLEPPCTKWTLSTFAEKHYAPFLLKPKAKVVVIFLFLGLLGLSLYGTTRVRDGLDLTDIVPRDTREYDFIAAQFKYFSFYNMYIVTQKADYPNVQHLLYELHRSFSNVTYVLLEGDRQLPKMWLHYFRDWLQGLQDAFDSDWETGKITYSNYKNGSDDAVLAYKLLVQTGNRAKPIDISQLTKQRLVDADGIINPNAFYIYLTAWVSNDPVAYAASQANIRPHRPEWVHDKADYMPETRLRIPAAEPIEYAQFPFYLNGLRETSDFVEAIEKVRAICNNYTSLGIASYPNGYPFLFWEQYIGLRHWLLLSISVVLACTFLVCALFLLNPWTAGIIVVVLALMTVELFGMMGLIGIKLSAVPVVILIASVGIGVEFTVHIALAFLTAIGDKNRRAVLALEHMFAPVLDGAVSTLLGVLMLAGSEFDFIVRYFFAVLAILTILGVLNGLVLLPVLLSFFGPYPEVSPACGRNRLPTPSPEPPPSIVRFALPPGHTNNGSDSSDSEYSSQTTVSGISEELHHYEATQSPGIPVHQVVVEATENPVFARSTVVQPESRHQSSPRLQSNPEAGTQQVWHQGRQPKQEVREGLRPPPYRPRRDAFEISTEGHSGPSNKDRLNHKAHSHNMRSPAFGAMGVPGSAYCQPITTVTASASVTVAVHPAVHSHNSCRGSFPSCEEYNEDDRGMFEDPHVPFNVRCERRNSKVEVIELQDVECEERTAGKISE.

Residues 1–45 (MASAADALEPESGSSTAGGGSHPVRAARSARGRRRRSGGTRRAAA) are disordered. The Cytoplasmic segment spans residues 1–101 (MASAADALEP…GCYIQKNCGK (101 aa)). The span at 28 to 39 (RSARGRRRRSGG) shows a compositional bias: basic residues. A helical transmembrane segment spans residues 102–122 (FLVVGLLYSAFAVGLRAANLE). Residues 123 to 436 (TNVEELWVEV…LDDILKSFSD (314 aa)) are Extracellular-facing. 4 N-linked (GlcNAc...) asparagine glycosylation sites follow: Asn141, Asn312, Asn349, and Asn414. A helical membrane pass occupies residues 437–457 (VSVIRVASGYLLMLAYACLTM). The region spanning 438–598 (SVIRVASGYL…LLIFPAILSM (161 aa)) is the SSD domain. Over 458–472 (LRWDCAKSQGAVGLA) the chain is Cytoplasmic. The helical transmembrane segment at 473–493 (GVLLVALSVAAGLGLCSLIGI) threads the bilayer. Topologically, residues 494–501 (SFNAATTQ) are extracellular. A helical transmembrane segment spans residues 502–522 (VLPFLALGVGVDDVFLLAHAF). Over 523-547 (SETGQNKRIPFEDRTGECLKRTGAS) the chain is Cytoplasmic. The helical transmembrane segment at 548-568 (VALTSISNVTAFFMAALIPIP) threads the bilayer. Over 569-577 (ALRAFSLQA) the chain is Extracellular. Residues 578–598 (AVVVVFNFAMVLLIFPAILSM) form a helical membrane-spanning segment. Residues 599–747 (DLYRREDRRL…HYAPFLLKPK (149 aa)) lie on the Cytoplasmic side of the membrane. A helical membrane pass occupies residues 748–768 (AKVVVIFLFLGLLGLSLYGTT). Topologically, residues 769–1026 (RVRDGLDLTD…WEQYIGLRHW (258 aa)) are extracellular. N-linked (GlcNAc...) asparagine glycosylation is found at Asn827, Asn874, and Asn999. A helical transmembrane segment spans residues 1027 to 1047 (LLLSISVVLACTFLVCALFLL). Topologically, residues 1048 to 1053 (NPWTAG) are cytoplasmic. A helical membrane pass occupies residues 1054–1074 (IIVVVLALMTVELFGMMGLIG). Topologically, residues 1075–1082 (IKLSAVPV) are extracellular. Residues 1083–1101 (VILIASVGIGVEFTVHIAL) form a helical membrane-spanning segment. At 1102-1120 (AFLTAIGDKNRRAVLALEH) the chain is on the cytoplasmic side. Residues 1121 to 1141 (MFAPVLDGAVSTLLGVLMLAG) traverse the membrane as a helical segment. Topologically, residues 1142–1153 (SEFDFIVRYFFA) are extracellular. The helical transmembrane segment at 1154-1174 (VLAILTILGVLNGLVLLPVLL) threads the bilayer. At 1175–1442 (SFFGPYPEVS…EERTAGKISE (268 aa)) the chain is on the cytoplasmic side. Disordered regions lie at residues 1188-1231 (GRNR…TTVS) and 1266-1338 (STVV…LNHK). The span at 1217-1226 (SDSSDSEYSS) shows a compositional bias: low complexity. The span at 1276–1293 (QSSPRLQSNPEAGTQQVW) shows a compositional bias: polar residues.

Belongs to the patched family. Post-translationally, glycosylation is necessary for SHH binding. As to expression, expression is seen in the embryonic neural tube, sclerotome, visceral mesoderm, and limb bud.

The protein localises to the membrane. Its function is as follows. Acts as a receptor for sonic hedgehog (SHH), indian hedgehog (IHH) and desert hedgehog (DHH). Associates with the smoothened protein (SMO) to transduce the hedgehog's proteins signal. The protein is Protein patched homolog 1 (PTCH1) of Gallus gallus (Chicken).